The following is a 103-amino-acid chain: Large ribosomal subunit protein bL21 (103 aa).

The protein belongs to the bacterial ribosomal protein bL21 family. As to quaternary structure, part of the 50S ribosomal subunit. Contacts protein L20.

This protein binds to 23S rRNA in the presence of protein L20. The polypeptide is Large ribosomal subunit protein bL21 (Burkholderia ambifaria (strain MC40-6)).